The sequence spans 275 residues: Fructose-2,6-bisphosphatase TIGAR (275 aa).

The active-site Tele-phosphohistidine intermediate is His-11. Glu-89 functions as the Proton donor/acceptor in the catalytic mechanism.

Belongs to the phosphoglycerate mutase family.

It localises to the cytoplasm. Its subcellular location is the nucleus. It is found in the mitochondrion. The catalysed reaction is beta-D-fructose 2,6-bisphosphate + H2O = beta-D-fructose 6-phosphate + phosphate. Fructose-bisphosphatase hydrolyzing fructose-2,6-bisphosphate as well as fructose-1,6-bisphosphate. Acts as a negative regulator of glycolysis by lowering intracellular levels of fructose-2,6-bisphosphate in a p53/TP53-dependent manner, resulting in the pentose phosphate pathway (PPP) activation and NADPH production. Contributes to the generation of reduced glutathione to cause a decrease in intracellular reactive oxygen species (ROS) content, correlating with its ability to protect cells from oxidative or metabolic stress-induced cell death. May play a role in mitophagy inhibition. The protein is Fructose-2,6-bisphosphatase TIGAR of Xenopus tropicalis (Western clawed frog).